A 92-amino-acid chain; its full sequence is C-C motif chemokine 4 (92 aa).

An N-terminal signal peptide occupies residues 1 to 23; that stretch reads MKLGVTVLSVALLVAALCPPALS. 2 cysteine pairs are disulfide-bonded: Cys34/Cys58 and Cys35/Cys74.

Belongs to the intercrine beta (chemokine CC) family. As to quaternary structure, homodimer.

It localises to the secreted. In terms of biological role, monokine with inflammatory and chemokinetic properties. The polypeptide is C-C motif chemokine 4 (CCL4) (Oryctolagus cuniculus (Rabbit)).